The primary structure comprises 372 residues: Chorismate synthase (372 aa).

NADP(+)-binding residues include R48 and R54. FMN contacts are provided by residues 125-127, 238-239, G278, 293-297, and R319; these read RSS, NA, and KPTSS.

This sequence belongs to the chorismate synthase family. As to quaternary structure, homotetramer. The cofactor is FMNH2.

The enzyme catalyses 5-O-(1-carboxyvinyl)-3-phosphoshikimate = chorismate + phosphate. It participates in metabolic intermediate biosynthesis; chorismate biosynthesis; chorismate from D-erythrose 4-phosphate and phosphoenolpyruvate: step 7/7. Its function is as follows. Catalyzes the anti-1,4-elimination of the C-3 phosphate and the C-6 proR hydrogen from 5-enolpyruvylshikimate-3-phosphate (EPSP) to yield chorismate, which is the branch point compound that serves as the starting substrate for the three terminal pathways of aromatic amino acid biosynthesis. This reaction introduces a second double bond into the aromatic ring system. The sequence is that of Chorismate synthase from Xylella fastidiosa (strain M23).